A 287-amino-acid chain; its full sequence is Neugrin (287 aa).

A signal peptide spans 1–23 (MAFSPNVLLGGRVCAAVARSGFA). Residues 149–169 (SIPELPGPGDSSKPLSAGQSV) form a disordered region. Asparagine 202 is a glycosylation site (N-linked (GlcNAc...) asparagine).

It belongs to the neugrin family. As to quaternary structure, forms a regulatory protein-RNA complex, consisting of RCC1L, NGRN, RPUSD3, RPUSD4, TRUB2, FASTKD2 and 16S mt-rRNA. Interacts with 16S mt-rRNA; this interaction is direct.

Its subcellular location is the nucleus. It localises to the secreted. It is found in the mitochondrion membrane. In terms of biological role, plays an essential role in mitochondrial ribosome biogenesis. As a component of a functional protein-RNA module, consisting of RCC1L, NGRN, RPUSD3, RPUSD4, TRUB2, FASTKD2 and 16S mitochondrial ribosomal RNA (16S mt-rRNA), controls 16S mt-rRNA abundance and is required for intra-mitochondrial translation of core subunits of the oxidative phosphorylation system. In Bos taurus (Bovine), this protein is Neugrin (NGRN).